A 521-amino-acid polypeptide reads, in one-letter code: Beta-glucosidase 11 (521 aa).

The signal sequence occupies residues 1–23 (MKLLSNSLMFLPLLALALTAVSS). Residues Gln-45, His-144, and 189–190 (NE) contribute to the a beta-D-glucoside site. Glu-190 functions as the Proton donor in the catalytic mechanism. A disulfide bridge links Cys-209 with Cys-217. Asn-216 and Asn-221 each carry an N-linked (GlcNAc...) asparagine glycan. Tyr-356 serves as a coordination point for a beta-D-glucoside. N-linked (GlcNAc...) asparagine glycans are attached at residues Asn-364 and Asn-388. A beta-D-glucoside contacts are provided by Glu-422, Trp-466, and Phe-482. The active-site Nucleophile is the Glu-422.

It belongs to the glycosyl hydrolase 1 family.

It catalyses the reaction Hydrolysis of terminal, non-reducing beta-D-glucosyl residues with release of beta-D-glucose.. This is Beta-glucosidase 11 from Arabidopsis thaliana (Mouse-ear cress).